The primary structure comprises 565 residues: NAD-dependent malic enzyme (565 aa).

Tyr104 (proton donor) is an active-site residue. Arg157 lines the NAD(+) pocket. Lys175 functions as the Proton acceptor in the catalytic mechanism. Residues Glu246, Asp247, and Asp270 each coordinate a divalent metal cation. 2 residues coordinate NAD(+): Asp270 and Asn418.

Belongs to the malic enzymes family. Homotetramer. It depends on Mg(2+) as a cofactor. Requires Mn(2+) as cofactor.

The enzyme catalyses (S)-malate + NAD(+) = pyruvate + CO2 + NADH. The catalysed reaction is oxaloacetate + H(+) = pyruvate + CO2. This is NAD-dependent malic enzyme from Escherichia coli (strain SMS-3-5 / SECEC).